Reading from the N-terminus, the 415-residue chain is E3 ubiquitin-protein ligase RNF135 (415 aa).

Residues 21 to 67 (CIICQGLLDWPTTLPCGHSFCLQCLKDLWVSKRAGVDSCPWACPICR) form an RING-type zinc finger. Positions 181-206 (TFSASQKKIQEILRDLEKIQETLQGS) form a coiled coil. The B30.2/SPRY domain occupies 228 to 415 (PDQRYPVSRK…LTPGNYLEIL (188 aa)).

In terms of assembly, homodimer. Interacts (homodimer) with RIGI (double-stranded RNA-bound oligomeric form); involved in both RIGI ubiquitination, oligomerization into filaments associated with viral RNAs and the bridging of these filaments. Interacts with UBE2D3 and UBE2N; E2 ubiquitin ligases involved in RNF135-mediated ubiquitination of RIGI and activation of the RIG-I signaling pathway. Interacts with PCBP2.

Its subcellular location is the cytoplasm. The protein localises to the stress granule. The catalysed reaction is S-ubiquitinyl-[E2 ubiquitin-conjugating enzyme]-L-cysteine + [acceptor protein]-L-lysine = [E2 ubiquitin-conjugating enzyme]-L-cysteine + N(6)-ubiquitinyl-[acceptor protein]-L-lysine.. Its pathway is protein modification; protein ubiquitination. E2-dependent E3 ubiquitin-protein ligase that functions as a RIGI coreceptor in the sensing of viral RNAs in cell cytoplasm and the activation of the antiviral innate immune response. Together with the UBE2D3, UBE2N and UB2V1 E2 ligases, catalyzes the 'Lys-63'-linked polyubiquitination of RIGI oligomerized on viral RNAs, an essential step in the activation of the RIG-I signaling pathway. Through a ubiquitin-independent parallel mechanism, which consists in bridging RIGI filaments forming on longer viral RNAs, further activates the RIG-I signaling pathway. This second mechanism that synergizes with the ubiquitin-dependent one would thereby allow an RNA length-dependent regulation of the RIG-I signaling pathway. Associated with the E2 ligase UBE2N, also constitutively synthesizes unanchored 'Lys-63'-linked polyubiquitin chains that may also activate the RIG-I signaling pathway. The sequence is that of E3 ubiquitin-protein ligase RNF135 from Rattus norvegicus (Rat).